A 1015-amino-acid chain; its full sequence is GTPase-activating Rap/Ran-GAP domain-like protein 3 (1015 aa).

The Rap-GAP domain occupies Leu200–Leu416. The 315-residue stretch at Pro498–Tyr812 folds into the CNH domain. Disordered regions lie at residues Ser821 to Tyr842 and Glu924 to Ser1004. The span at Ser823–Ser835 shows a compositional bias: low complexity. The segment covering Lys949–Ala959 has biased composition (basic and acidic residues).

Belongs to the GARNL3 family.

This Danio rerio (Zebrafish) protein is GTPase-activating Rap/Ran-GAP domain-like protein 3 (garnl3).